Consider the following 430-residue polypeptide: 5-methylthioadenosine/S-adenosylhomocysteine deaminase (430 aa).

Zn(2+) contacts are provided by H63 and H65. The substrate site is built by E92, R144, and H182. Residue H209 coordinates Zn(2+). Substrate contacts are provided by E212 and D297. D297 lines the Zn(2+) pocket.

This sequence belongs to the metallo-dependent hydrolases superfamily. MTA/SAH deaminase family. Requires Zn(2+) as cofactor.

It carries out the reaction S-adenosyl-L-homocysteine + H2O + H(+) = S-inosyl-L-homocysteine + NH4(+). It catalyses the reaction S-methyl-5'-thioadenosine + H2O + H(+) = S-methyl-5'-thioinosine + NH4(+). Its function is as follows. Catalyzes the deamination of 5-methylthioadenosine and S-adenosyl-L-homocysteine into 5-methylthioinosine and S-inosyl-L-homocysteine, respectively. Is also able to deaminate adenosine. The polypeptide is 5-methylthioadenosine/S-adenosylhomocysteine deaminase (Desulforudis audaxviator (strain MP104C)).